Consider the following 731-residue polypeptide: Putative beta-galactosidase (731 aa).

Positions 1–29 (MLCGKENNVMKMMLVYVFVLITLISCVYG) are cleaved as a signal peptide. The Proton donor role is filled by Glu187. Glu257 functions as the Nucleophile in the catalytic mechanism.

Belongs to the glycosyl hydrolase 35 family. As to expression, senescing flower petals.

It carries out the reaction Hydrolysis of terminal non-reducing beta-D-galactose residues in beta-D-galactosides.. The protein is Putative beta-galactosidase (CARSR12) of Dianthus caryophyllus (Carnation).